The sequence spans 214 residues: Alkaline phosphatase-like protein (214 aa).

3 helical membrane passes run 48 to 68 (LGII…ALIL), 141 to 161 (FLIL…CLGA), and 177 to 197 (YSSV…LIFV).

This sequence belongs to the DedA family.

Its subcellular location is the cell membrane. The chain is Alkaline phosphatase-like protein (apl) from Lactococcus lactis subsp. lactis (strain IL1403) (Streptococcus lactis).